The sequence spans 241 residues: Triosephosphate isomerase (241 aa).

9-11 (NWK) contributes to the substrate binding site. Catalysis depends on His-96, which acts as the Electrophile. The active-site Proton acceptor is Glu-165. Residues Gly-171, Ser-204, and 225-226 (GG) contribute to the substrate site.

It belongs to the triosephosphate isomerase family. Homodimer.

It localises to the cytoplasm. The catalysed reaction is D-glyceraldehyde 3-phosphate = dihydroxyacetone phosphate. It functions in the pathway carbohydrate biosynthesis; gluconeogenesis. It participates in carbohydrate degradation; glycolysis; D-glyceraldehyde 3-phosphate from glycerone phosphate: step 1/1. In terms of biological role, involved in the gluconeogenesis. Catalyzes stereospecifically the conversion of dihydroxyacetone phosphate (DHAP) to D-glyceraldehyde-3-phosphate (G3P). The protein is Triosephosphate isomerase of Picosynechococcus sp. (strain ATCC 27264 / PCC 7002 / PR-6) (Agmenellum quadruplicatum).